A 217-amino-acid polypeptide reads, in one-letter code: Small ribosomal subunit protein uS3 (217 aa).

In terms of domain architecture, KH type-2 spans 29-97; sequence ADYLHEDLAI…AQLNKLTGKQ (69 aa).

Belongs to the universal ribosomal protein uS3 family. In terms of assembly, part of the 30S ribosomal subunit. Forms a tight complex with proteins S10 and S14.

Its function is as follows. Binds the lower part of the 30S subunit head. Binds mRNA in the 70S ribosome, positioning it for translation. This Streptococcus mutans serotype c (strain ATCC 700610 / UA159) protein is Small ribosomal subunit protein uS3.